A 570-amino-acid chain; its full sequence is Trans-cinnamate:CoA ligase, peroxisomal (570 aa).

The Microbody targeting signal signature appears at 568–570 (ARL).

This sequence belongs to the ATP-dependent AMP-binding enzyme family. In terms of assembly, monomer. It depends on K(+) as a cofactor. Mostly expressed in flower organs, with highest levels in corollas and petal limbs, and, to a lesser extent, in petal tubes, sepals, pistils, stamen, stigma, anthers and ovaries. Also present at low levels in leaves, stems and roots.

It localises to the peroxisome. The enzyme catalyses (E)-4-coumarate + ATP + CoA = (E)-4-coumaroyl-CoA + AMP + diphosphate. It carries out the reaction (E)-caffeate + ATP + CoA = (E)-caffeoyl-CoA + AMP + diphosphate. It catalyses the reaction (E)-cinnamate + ATP + CoA = (E)-cinnamoyl-CoA + AMP + diphosphate. It functions in the pathway phenylpropanoid metabolism; trans-cinnamate biosynthesis. The protein operates within phytoalexin biosynthesis; 3,4',5-trihydroxystilbene biosynthesis; 3,4',5-trihydroxystilbene from trans-4-coumarate: step 1/2. Involved in the biosynthesis of floral volatile benzenoid/phenylpropanoid (FVBP) scent (e.g. benzylbenzoate, phenylethylbenzoate, and methylbenzoate). Catalyzes the formation of CoA esters of cinnamic acid, and, with lower efficiency, of 4-coumaric acid and caffeic acid. The protein is Trans-cinnamate:CoA ligase, peroxisomal of Petunia hybrida (Petunia).